We begin with the raw amino-acid sequence, 250 residues long: Pyrroloquinoline-quinone synthase (250 aa).

It belongs to the PqqC family.

It catalyses the reaction 6-(2-amino-2-carboxyethyl)-7,8-dioxo-1,2,3,4,7,8-hexahydroquinoline-2,4-dicarboxylate + 3 O2 = pyrroloquinoline quinone + 2 H2O2 + 2 H2O + H(+). The protein operates within cofactor biosynthesis; pyrroloquinoline quinone biosynthesis. Functionally, ring cyclization and eight-electron oxidation of 3a-(2-amino-2-carboxyethyl)-4,5-dioxo-4,5,6,7,8,9-hexahydroquinoline-7,9-dicarboxylic-acid to PQQ. The chain is Pyrroloquinoline-quinone synthase from Xanthomonas oryzae pv. oryzae (strain PXO99A).